The following is a 529-amino-acid chain: Lysophosphatidylcholine acyltransferase 2 (529 aa).

Residues 1 to 50 (MPPPHRVFALPRQQSLLLPAVINPFVHDLSLSTADITKCFLLGIILVPLR) are Cytoplasmic-facing. Residues 51–71 (AIFLLLVLLVMWPVSVIITFG) traverse the membrane as a helical; Signal-anchor for type II membrane protein segment. Topologically, residues 72-529 (QSLKGVVEPM…EDSASDKKDD (458 aa)) are lumenal. The short motif at 128–133 (HSSFFD) is the HXXXXD motif element. Residues 202–205 (EGTC) carry the EGTC motif motif. The N-linked (GlcNAc...) asparagine glycan is linked to asparagine 207. EF-hand domains are found at residues 373 to 408 (PISPALQQLFALFDRNGDGTIDFREYVIGVTVLCRP), 410 to 445 (NNEEVIQTAFKLFDIDEDNCITQEEFSSLLRSALGV), and 449 to 480 (DVHSLFREIDADGSGHITYDEFRSFALNHPEY). Aspartate 386, asparagine 388, aspartate 390, threonine 392, glutamate 397, aspartate 423, aspartate 425, aspartate 427, cysteine 429, glutamate 434, aspartate 458, aspartate 460, serine 462, histidine 464, and glutamate 469 together coordinate Ca(2+).

Belongs to the 1-acyl-sn-glycerol-3-phosphate acyltransferase family.

The protein resides in the endoplasmic reticulum membrane. The protein localises to the golgi apparatus membrane. Its subcellular location is the cell membrane. It localises to the lipid droplet. It catalyses the reaction a 1-acyl-sn-glycero-3-phosphocholine + an acyl-CoA = a 1,2-diacyl-sn-glycero-3-phosphocholine + CoA. The enzyme catalyses a 1-O-alkyl-sn-glycero-3-phosphocholine + acetyl-CoA = a 1-O-alkyl-2-acetyl-sn-glycero-3-phosphocholine + CoA. It carries out the reaction a 1-acyl-sn-glycero-3-phosphate + an acyl-CoA = a 1,2-diacyl-sn-glycero-3-phosphate + CoA. The catalysed reaction is a 1-O-(1Z-alkenyl)-sn-glycero-3-phosphocholine + an acyl-CoA = a 1-O-(1Z-alkenyl)-2-acyl-sn-glycero-3-phosphocholine + CoA. It catalyses the reaction 1-hexadecanoyl-sn-glycero-3-phosphate + (9Z)-octadecenoyl-CoA = 1-hexadecanoyl-2-(9Z-octadecenoyl)-sn-glycero-3-phosphate + CoA. The enzyme catalyses 1-(9Z-octadecenoyl)-sn-glycero-3-phosphate + (9Z)-octadecenoyl-CoA = 1,2-di-(9Z-octadecenoyl)-sn-glycero-3-phosphate + CoA. It carries out the reaction 1-(9Z-octadecenoyl)-sn-glycero-3-phosphate + hexadecanoyl-CoA = 1-(9Z)-octadecenoyl-2-hexadecanoyl-sn-glycero-3-phosphate + CoA. The catalysed reaction is 1-heptadecanoyl-sn-glycero-3-phosphate + (9Z)-octadecenoyl-CoA = 1-heptadecanoyl-2-(9Z)-octadecenoyl-sn-glycero-3-phosphate + CoA. It catalyses the reaction 1-octadecanoyl-sn-glycero-3-phosphate + (9Z)-octadecenoyl-CoA = 1-octadecanoyl-2-(9Z-octadecenoyl)-sn-glycero-3-phosphate + CoA. The enzyme catalyses heptadecanoyl-CoA + 1-(9Z-octadecenoyl)-sn-glycero-3-phosphate = 1-(9Z)-octadecenoyl-2-heptadecanoyl-sn-glycero-3-phosphate + CoA. It carries out the reaction 1-(9Z-octadecenoyl)-sn-glycero-3-phosphate + (9Z,12Z)-octadecadienoyl-CoA = 1-(9Z)-octadecenoyl-2-(9Z,12Z)-octadecadienoyl-sn-glycero-3-phosphate + CoA. The catalysed reaction is 1-(9Z-octadecenoyl)-sn-glycero-3-phosphate + tetradecanoyl-CoA = 1-(9Z)-octadecenoyl-2-tetradecanoyl-sn-glycero-3-phosphate + CoA. It catalyses the reaction pentadecanoyl-CoA + 1-(9Z-octadecenoyl)-sn-glycero-3-phosphate = 1-(9Z)-octadecenoyl-2-pentadecanoyl-sn-glycero-3-phosphate + CoA. The enzyme catalyses nonadecanoyl-CoA + 1-(9Z-octadecenoyl)-sn-glycero-3-phosphate = 1-(9Z)-octadecenoyl-2-nonadecanoyl-sn-glycero-3-phosphate + CoA. It carries out the reaction 1-hexadecanoyl-sn-glycero-3-phosphocholine + (9Z)-octadecenoyl-CoA = 1-hexadecanoyl-2-(9Z-octadecenoyl)-sn-glycero-3-phosphocholine + CoA. The catalysed reaction is 1-O-hexadecyl-sn-glycero-3-phosphocholine + acetyl-CoA = 1-O-hexadecyl-2-acetyl-sn-glycero-3-phosphocholine + CoA. It catalyses the reaction 1-O-octadecyl-sn-glycero-3-phosphocholine + acetyl-CoA = 1-O-octadecyl-2-acetyl-sn-glycero-3-phosphocholine + CoA. The enzyme catalyses 1-hexadecanoyl-sn-glycero-3-phosphocholine + acetyl-CoA = 1-hexadecanoyl-2-acetyl-sn-glycero-3-phosphocholine + CoA. It carries out the reaction 1-octadecanoyl-sn-glycero-3-phosphocholine + acetyl-CoA = 1-octadecanoyl-2-acetyl-sn-glycero-3-phosphocholine + CoA. The catalysed reaction is a 1-O-(1Z-alkenyl)-sn-glycero-3-phosphocholine + acetyl-CoA = 1-O-(1Z)-alkenyl-2-acetyl-sn-glycero-3-phosphocholine + CoA. It catalyses the reaction 1-O-octadecyl-sn-glycero-3-phosphocholine + (5Z,8Z,11Z,14Z)-eicosatetraenoyl-CoA = 1-O-octadecyl-2-(5Z,8Z,11Z,14Z)-eicosatetraenoyl-sn-glycero-3-phosphocholine + CoA. Its pathway is lipid metabolism; phospholipid metabolism. Functionally, exhibits both acyltransferase and acetyltransferase activities. Activity is calcium-dependent. Catalyzes the conversion of lysophosphatidylcholine (1-acyl-sn-glycero-3-phosphocholine or LPC) into phosphatidylcholine (1,2-diacyl-sn-glycero-3-phosphocholine or PC). Catalyzes the conversion 1-acyl-sn-glycerol-3-phosphate (lysophosphatidic acid or LPA) into 1,2-diacyl-sn-glycerol-3-phosphate (phosphatidic acid or PA) by incorporating an acyl moiety at the sn-2 position of the glycerol backbone. Involved in platelet-activating factor (PAF) biosynthesis by catalyzing the conversion of the PAF precursor, 1-O-alkyl-sn-glycero-3-phosphocholine (lyso-PAF) into 1-O-alkyl-2-acetyl-sn-glycero-3-phosphocholine (PAF). The protein is Lysophosphatidylcholine acyltransferase 2 (lpcat2) of Danio rerio (Zebrafish).